Here is a 40-residue protein sequence, read N- to C-terminus: Natriuretic peptide PpNP-b (40 aa).

The propeptide occupies 1 to 8 (SGSKTANI). Cys12 and Cys28 are oxidised to a cystine. A disordered region spans residues 20-40 (IGTTSGMGCGRPRPKPTPGGS).

This sequence belongs to the natriuretic peptide family. In terms of tissue distribution, expressed by the venom gland.

It is found in the secreted. Snake venom natriuretic peptide that targets both NPR1 and NPR2. Exhibits hypotensive and vasodepressor activities. The protein is Natriuretic peptide PpNP-b of Pseudechis porphyriacus (Red-bellied black snake).